The sequence spans 242 residues: Type III pantothenate kinase (242 aa).

7-14 (DLGNSRFK) lines the ATP pocket. Substrate is bound by residues tyrosine 91 and 98-101 (GVDR). Aspartate 100 functions as the Proton acceptor in the catalytic mechanism. Threonine 121 contributes to the ATP binding site. Threonine 171 is a substrate binding site.

It belongs to the type III pantothenate kinase family. Homodimer. The cofactor is NH4(+). K(+) serves as cofactor.

The protein localises to the cytoplasm. It catalyses the reaction (R)-pantothenate + ATP = (R)-4'-phosphopantothenate + ADP + H(+). Its pathway is cofactor biosynthesis; coenzyme A biosynthesis; CoA from (R)-pantothenate: step 1/5. In terms of biological role, catalyzes the phosphorylation of pantothenate (Pan), the first step in CoA biosynthesis. The polypeptide is Type III pantothenate kinase (Xanthomonas campestris pv. campestris (strain B100)).